The sequence spans 561 residues: Rho guanine nucleotide exchange factor 9 (561 aa).

An SH3 domain is found at 53-112 (DSIVSAEAVWDHVTMANRELAFKAGDVIKVLDASNKDWWWGQIDDEEGWFPASFVRLWVN). An interaction with GPHN region spans residues 145-155 (RDQMRANVINE). The 185-residue stretch at 148 to 332 (MRANVINEIM…RNVTQQINER (185 aa)) folds into the DH domain. The 108-residue stretch at 363 to 470 (ELIYTGEMAW…WLRAFREERK (108 aa)) folds into the PH domain. Residues 499–524 (KQKGVNSARSVPPSYPPPQDPLNQGQ) form a disordered region. Phosphoserine is present on Ser547.

In terms of assembly, interacts with GPHN.

It is found in the cytoplasm. Its subcellular location is the postsynaptic density. In terms of biological role, acts as a guanine nucleotide exchange factor (GEF) for CDC42. Promotes formation of GPHN clusters. The sequence is that of Rho guanine nucleotide exchange factor 9 (ARHGEF9) from Bos taurus (Bovine).